Here is a 262-residue protein sequence, read N- to C-terminus: Dihydroorotate dehydrogenase B (NAD(+)), electron transfer subunit (262 aa).

An FAD-binding FR-type domain is found at 3-104; the sequence is KLQEMMTIVS…MGPLGNGFPV (102 aa). FAD is bound by residues 53-56, 70-72, and 79-80; these read RPIS, LYR, and GT. [2Fe-2S] cluster is bound by residues Cys226, Cys231, Cys234, and Cys249.

Belongs to the PyrK family. Heterotetramer of 2 PyrK and 2 PyrD type B subunits. It depends on [2Fe-2S] cluster as a cofactor. Requires FAD as cofactor.

It functions in the pathway pyrimidine metabolism; UMP biosynthesis via de novo pathway; orotate from (S)-dihydroorotate (NAD(+) route): step 1/1. Functionally, responsible for channeling the electrons from the oxidation of dihydroorotate from the FMN redox center in the PyrD type B subunit to the ultimate electron acceptor NAD(+). The protein is Dihydroorotate dehydrogenase B (NAD(+)), electron transfer subunit of Lactococcus lactis subsp. lactis (strain IL1403) (Streptococcus lactis).